A 43-amino-acid polypeptide reads, in one-letter code: Bacteriocin mundticin (43 aa).

Cys9 and Cys14 form a disulfide bridge.

This bacteriocin inhibits the growth of several Gram-positive bacteria, especially pathogenic L.monocytogenes and C.botulinum but has no effect on the growth of a number of yeasts and Gram-negative bacteria. In Enterococcus mundtii, this protein is Bacteriocin mundticin.